We begin with the raw amino-acid sequence, 240 residues long: Glutathione S-transferase U9 (240 aa).

Residues 7 to 86 (NKVILHGSFA…YIDETWSNGP (80 aa)) enclose the GST N-terminal domain. Glutathione is bound by residues 17–18 (SP), 43–44 (NK), 57–58 (KI), and 70–71 (ES). The 135-residue stretch at 92 to 226 (DPYRRSKVRF…EQILEILRAF (135 aa)) folds into the GST C-terminal domain. Threonine 161 carries the phosphothreonine modification.

This sequence belongs to the GST superfamily. Tau family.

The protein resides in the cytoplasm. Its subcellular location is the cytosol. The enzyme catalyses RX + glutathione = an S-substituted glutathione + a halide anion + H(+). In terms of biological role, may be involved in the conjugation of reduced glutathione to a wide number of exogenous and endogenous hydrophobic electrophiles and have a detoxification role against certain herbicides. The sequence is that of Glutathione S-transferase U9 (GSTU9) from Arabidopsis thaliana (Mouse-ear cress).